Reading from the N-terminus, the 263-residue chain is MEDETELCFRSNKVTRLEMFVCTYGGKISSLACSHMELIKRLQIAEPVKALNCNFGHQCLPGYESLIKTPKKNKNMLRRPRKTEGDGTCFNSAIEASILFKDKMYKLKCFPSTGEIQVPGVIFPDFEDGKNIIQQWVEFLQHQPIEKKVQIIEFKTIMINFKFQINPVSPRVIIHLKKFAALLEQIPTPYPIREIKPPLEDSKVSAKFMVSPGKKVRINVFLKGKINILGCNTKESAETIYTFLKDLISVHWQEILCVLPVPD.

This sequence belongs to the asfivirus B263R family.

Functionally, putative TATA-binding protein. In African swine fever virus (isolate Tick/Malawi/Lil 20-1/1983) (ASFV), this protein is Putative TATA-binding protein pB263R.